The following is a 152-amino-acid chain: UPF0735 ACT domain-containing protein SAS1579 (152 aa).

The 76-residue stretch at 75–150 folds into the ACT domain; it reads TLILYVTDIV…YVSKVELISM (76 aa).

The protein belongs to the UPF0735 family.

The chain is UPF0735 ACT domain-containing protein SAS1579 from Staphylococcus aureus (strain MSSA476).